Consider the following 431-residue polypeptide: NADH-quinone oxidoreductase subunit D 2 (431 aa).

A disordered region spans residues M1–A27.

Belongs to the complex I 49 kDa subunit family. In terms of assembly, NDH-1 is composed of 14 different subunits. Subunits NuoB, C, D, E, F, and G constitute the peripheral sector of the complex.

Its subcellular location is the cell inner membrane. The catalysed reaction is a quinone + NADH + 5 H(+)(in) = a quinol + NAD(+) + 4 H(+)(out). In terms of biological role, NDH-1 shuttles electrons from NADH, via FMN and iron-sulfur (Fe-S) centers, to quinones in the respiratory chain. The immediate electron acceptor for the enzyme in this species is believed to be ubiquinone. Couples the redox reaction to proton translocation (for every two electrons transferred, four hydrogen ions are translocated across the cytoplasmic membrane), and thus conserves the redox energy in a proton gradient. The protein is NADH-quinone oxidoreductase subunit D 2 of Anaeromyxobacter sp. (strain Fw109-5).